A 307-amino-acid polypeptide reads, in one-letter code: Membrane protein insertase YidC 1 (307 aa).

The signal sequence occupies residues 1 to 22 (MKSKKGLTLTITLGTLALFLSG). Residue Cys23 is the site of N-palmitoyl cysteine attachment. The S-diacylglycerol cysteine moiety is linked to residue Cys23. The next 5 membrane-spanning stretches (helical) occupy residues 59–79 (YGWA…PMMI), 136–156 (GIGC…YYAI), 177–197 (LILA…SMIG), 205–225 (TMRL…MSAP), and 226–246 (AGLG…TLII). The interval 260–307 (ELKKHPIKTPTPTQPKPINATESKPSHPRPQNNAGRGRNAGKQQRHHK) is disordered.

It belongs to the OXA1/ALB3/YidC family. Type 2 subfamily.

Its subcellular location is the cell membrane. Required for the insertion and/or proper folding and/or complex formation of integral membrane proteins into the membrane. Involved in integration of membrane proteins that insert both dependently and independently of the Sec translocase complex, as well as at least some lipoproteins. The sequence is that of Membrane protein insertase YidC 1 from Lactiplantibacillus plantarum (strain ATCC BAA-793 / NCIMB 8826 / WCFS1) (Lactobacillus plantarum).